We begin with the raw amino-acid sequence, 942 residues long: Endoprotease bli-4 (942 aa).

An N-terminal signal peptide occupies residues 1–22; that stretch reads MRISIGRIAWQILAVLIAVAFT. Residues 23–116 constitute a propeptide that is removed on maturation; it reads IEHDSICDES…EQRPKKRVKR (94 aa). Topologically, residues 117 to 871 are lumenal; that stretch reads DYILLDNDVH…TLLIDSNKSS (755 aa). D124 is a Ca(2+) binding site. The tract at residues 130–160 is disordered; sequence PFRRSVLNRDGTRRAQRQQPQSPREIPSLPF. A Peptidase S8 domain is found at 168–483; sequence QWYLHGGAVG…YGLIDGGALV (316 aa). N195 carries an N-linked (GlcNAc...) asparagine glycan. The Charge relay system role is filled by D202. D203 is a binding site for substrate. Residues D211, D223, D228, and D230 each contribute to the Ca(2+) site. Residues 211 to 242 are disordered; the sequence is DLAANYDPLASTDINDHDDDPTPQNNGDNKHG. 238-239 provides a ligand contact to substrate; the sequence is DN. H241 (charge relay system) is an active-site residue. Ca(2+) is bound by residues L252, N255, Q257, and G259. 2 cysteine pairs are disulfide-bonded: C258–C407 and C350–C380. Residues E283, 300–305, D311, and 339–342 contribute to the substrate site; these read SWGPED and ASGN. D305 serves as a coordination point for Ca(2+). Ca(2+) is bound at residue D348. 2 residues coordinate substrate: D353 and Y355. A Ca(2+)-binding site is contributed by E378. S415 acts as the Charge relay system in catalysis. A substrate-binding site is contributed by S415. A P/Homo B domain is found at 491 to 629; that stretch reads TVPEQHICTY…TLLLYGTADP (139 aa). An intrachain disulfide couples C498 to C527. A glycan (N-linked (GlcNAc...) asparagine) is linked at N519. FU repeat units lie at residues 674 to 723, 725 to 777, and 804 to 850; these read NCHD…YYLD, DKCK…LVAD, and GKCD…STKS. Residue N868 is glycosylated (N-linked (GlcNAc...) asparagine). Residues 872–892 traverse the membrane as a helical segment; the sequence is GFGLMFWIVVSLIAACGICAC. The Cytoplasmic portion of the chain corresponds to 893-942; it reads KKCASETKSSNVEYAPLAQYNATNGAINLGAHTDDEDDDEDEVFVNPQIV. The interval 922–942 is disordered; sequence GAHTDDEDDDEDEVFVNPQIV. Residues 926-935 are compositionally biased toward acidic residues; sequence DDEDDDEDEV.

Belongs to the peptidase S8 family. Furin subfamily. The cofactor is Ca(2+). In terms of tissue distribution, in larvae and adults, expressed in all hypodermal cells, vulva and ventral nerve cords. As to expression, most highly expressed isoform in the embryonic epidermis. Expressed primarily in the germline. In terms of tissue distribution, expressed primarily in pharyngeal epithelial cells.

It localises to the membrane. Serine endoprotease which cleaves proproteins at paired basic amino acids at the consensus RX(K/R)R motif. Involved in N-terminal processing of cuticle collagens and plays a role in cuticle biosynthesis. May cleave both sqt-3 and dpy-17 collagens to promote their secretion. Acts in ASEL sensory neurons to regulate high salt chemotaxis responses probably by cleaving insulin-like protein ins-6 into its mature and active form. Essential for embryonic and larval development. Its function is as follows. Involved in cuticle biosynthesis but dispensable for larval development. In Caenorhabditis elegans, this protein is Endoprotease bli-4 (bli-4).